The primary structure comprises 192 residues: MEMIVIAVVALTLLALLFGMLLGYASRRFAAEEDPVVDQVDELLPQSQCGQCGYPGCRPYAEAVANNGEQINRCVPGGEPVMQKIATLLNVEPQPLDGDAAMAEPVRMLAVIDEPNCIGCTKCIQACPVDAIVGATRAMHTVMSDLCTGCNLCVDPCPTQCIELRPAATTTDNWKWDLNTIPVRNIPVEQHA.

The interval 1–26 is hydrophobic; sequence MEMIVIAVVALTLLALLFGMLLGYAS. A 4Fe-4S domain is found at 32–91; that stretch reads EEDPVVDQVDELLPQSQCGQCGYPGCRPYAEAVANNGEQINRCVPGGEPVMQKIATLLNV. Cysteine 49, cysteine 52, cysteine 57, cysteine 74, cysteine 117, cysteine 120, cysteine 123, cysteine 127, cysteine 147, cysteine 150, cysteine 153, and cysteine 157 together coordinate [4Fe-4S] cluster. 4Fe-4S ferredoxin-type domains follow at residues 108–137 and 138–167; these read MLAV…GATR and AMHT…LRPA.

It belongs to the 4Fe4S bacterial-type ferredoxin family. RnfB subfamily. The complex is composed of six subunits: RnfA, RnfB, RnfC, RnfD, RnfE and RnfG. Requires [4Fe-4S] cluster as cofactor.

It localises to the cell inner membrane. Functionally, part of a membrane-bound complex that couples electron transfer with translocation of ions across the membrane. This is Ion-translocating oxidoreductase complex subunit B from Cronobacter sakazakii (strain ATCC BAA-894) (Enterobacter sakazakii).